The following is a 92-amino-acid chain: Small ribosomal subunit protein uS19 (92 aa).

This sequence belongs to the universal ribosomal protein uS19 family.

Protein S19 forms a complex with S13 that binds strongly to the 16S ribosomal RNA. This is Small ribosomal subunit protein uS19 from Polaromonas naphthalenivorans (strain CJ2).